Here is a 109-residue protein sequence, read N- to C-terminus: uncharacterized protein (109 aa).

A helical membrane pass occupies residues 29 to 49 (ITIIITLVIIFIIFTLIILYF).

The protein resides in the membrane. This is an uncharacterized protein from Sputnik virophage.